The primary structure comprises 316 residues: Pyridoxal 5'-phosphate synthase subunit PdxS (316 aa).

Asp44 is a D-ribose 5-phosphate binding site. Residue Lys101 is the Schiff-base intermediate with D-ribose 5-phosphate of the active site. Gly173 lines the D-ribose 5-phosphate pocket. Lys185 lines the D-glyceraldehyde 3-phosphate pocket. Residues Gly234 and 255-256 (GS) contribute to the D-ribose 5-phosphate site.

It belongs to the PdxS/SNZ family. In the presence of PdxT, forms a dodecamer of heterodimers.

It carries out the reaction aldehydo-D-ribose 5-phosphate + D-glyceraldehyde 3-phosphate + L-glutamine = pyridoxal 5'-phosphate + L-glutamate + phosphate + 3 H2O + H(+). It functions in the pathway cofactor biosynthesis; pyridoxal 5'-phosphate biosynthesis. Catalyzes the formation of pyridoxal 5'-phosphate from ribose 5-phosphate (RBP), glyceraldehyde 3-phosphate (G3P) and ammonia. The ammonia is provided by the PdxT subunit. Can also use ribulose 5-phosphate and dihydroxyacetone phosphate as substrates, resulting from enzyme-catalyzed isomerization of RBP and G3P, respectively. The sequence is that of Pyridoxal 5'-phosphate synthase subunit PdxS from Sulfurisphaera tokodaii (strain DSM 16993 / JCM 10545 / NBRC 100140 / 7) (Sulfolobus tokodaii).